A 423-amino-acid polypeptide reads, in one-letter code: Lipid droplet-regulating VLDL assembly factor AUP1 (423 aa).

Residues Met1–Arg19 are Cytoplasmic-facing. An intramembrane segment occupies Phe20–Ile40. At Phe41 to Leu423 the chain is on the cytoplasmic side. The CUE domain occupies Arg304 to Asp346. A disordered region spans residues Thr355 to Arg392. Over residues Ala365–Asn377 the composition is skewed to polar residues.

The protein belongs to the AUP1 family.

The protein resides in the endoplasmic reticulum membrane. The protein localises to the lipid droplet. Functionally, plays a role in the translocation of terminally misfolded proteins from the endoplasmic reticulum lumen to the cytoplasm and their degradation by the proteasome. Plays a role in lipid droplet formation. Induces lipid droplet clustering. The protein is Lipid droplet-regulating VLDL assembly factor AUP1 of Danio rerio (Zebrafish).